The following is a 122-amino-acid chain: FMN-binding protein (122 aa).

In terms of assembly, monomer and homodimer. It depends on FMN as a cofactor.

The protein resides in the cytoplasm. Functions as a redox protein with a potential of -325 mV. The sequence is that of FMN-binding protein from Nitratidesulfovibrio vulgaris (strain DSM 19637 / Miyazaki F) (Desulfovibrio vulgaris).